Here is an 830-residue protein sequence, read N- to C-terminus: Serine/threonine-protein kinase atg1 (830 aa).

The 294-residue stretch at 14–307 (YVIRSEIGRG…YDGFFSSIVV (294 aa)) folds into the Protein kinase domain. ATP contacts are provided by residues 20-28 (IGRGSFAIV) and Lys-43. Asp-157 acts as the Proton acceptor in catalysis. Ser-346 is subject to Phosphoserine. The span at 448–468 (TQLSNESLTHEQSINGNSPSP) shows a compositional bias: polar residues. Residues 448–480 (TQLSNESLTHEQSINGNSPSPNEGVFQGSFSPE) are disordered.

It belongs to the protein kinase superfamily. Ser/Thr protein kinase family. APG1/unc-51/ULK1 subfamily. As to quaternary structure, homodimer. Component of the atg1 kinase complex composed of at least atg1, atg13, atg17 and atg101. Interacts directly with atg13. In terms of processing, phosphorylated. Dephosphorylated under depletion of nitrogen.

It carries out the reaction L-seryl-[protein] + ATP = O-phospho-L-seryl-[protein] + ADP + H(+). It catalyses the reaction L-threonyl-[protein] + ATP = O-phospho-L-threonyl-[protein] + ADP + H(+). Its function is as follows. Serine/threonine protein kinase involved in the cytoplasm to vacuole transport (Cvt) and found to be essential in autophagy, where it is required for the formation of autophagosomes. Involved in the clearance of protein aggregates which cannot be efficiently cleared by the proteasome. Required for selective autophagic degradation of the nucleus (nucleophagy) as well as for mitophagy which contributes to regulate mitochondrial quantity and quality by eliminating the mitochondria to a basal level to fulfill cellular energy requirements and preventing excess ROS production. Also involved in endoplasmic reticulum-specific autophagic process, in selective removal of ER-associated degradation (ERAD) substrates. Plays a key role in ATG9 and ATG23 cycling through the pre-autophagosomal structure and is necessary to promote ATG18 binding to ATG9 through phosphorylation of ATG9. Catalyzes phosphorylation of ATG4, decreasing the interaction between ATG4 and ATG8 and impairing deconjugation of PE-conjugated forms of ATG8. Autophagy functions to supply nitrogen and is activated when cells cannot access exogenous nitrogen, thus ensuring that they can adapt and subsequently propagate. Finally, atg13 is also required for glycogen storage during stationary phase and has a role in meiosis and sporulation. In Schizosaccharomyces pombe (strain 972 / ATCC 24843) (Fission yeast), this protein is Serine/threonine-protein kinase atg1.